The sequence spans 810 residues: Plasminogen (810 aa).

An N-terminal signal peptide occupies residues 1–19 (MQRKELVLLFLLFLQPGHG). In terms of domain architecture, PAN spans 20–98 (IPLDDYVTTQ…RDVILFEKKM (79 aa)). 24 disulfides stabilise this stretch: cysteine 49-cysteine 73, cysteine 53-cysteine 61, cysteine 103-cysteine 181, cysteine 124-cysteine 164, cysteine 152-cysteine 176, cysteine 185-cysteine 262, cysteine 188-cysteine 316, cysteine 206-cysteine 245, cysteine 234-cysteine 257, cysteine 275-cysteine 352, cysteine 296-cysteine 335, cysteine 324-cysteine 347, cysteine 379-cysteine 456, cysteine 400-cysteine 439, cysteine 428-cysteine 451, cysteine 482-cysteine 561, cysteine 503-cysteine 544, cysteine 532-cysteine 556, cysteine 569-cysteine 685, cysteine 579-cysteine 586, cysteine 607-cysteine 623, cysteine 699-cysteine 766, cysteine 729-cysteine 745, and cysteine 756-cysteine 784. Kringle domains lie at 103 to 181 (CKVG…IIQC), 185 to 262 (CMHC…IPRC), 275 to 352 (CLMG…IPDC), 379 to 456 (CYQG…LKKC), and 482 to 561 (CIID…IPHC). Asparagine 339 carries N-linked (GlcNAc...) asparagine glycosylation. Residues 398–418 (KKCQPWTSMRPHRHSKTPENY) form a disordered region. One can recognise a Peptidase S1 domain in the interval 582–808 (RVGGCVAHPH…YVSWLQDVMR (227 aa)). Serine 598 is subject to Phosphoserine. Residues histidine 622 and aspartate 665 each act as charge relay system in the active site. Catalysis depends on serine 760, which acts as the Charge relay system.

It belongs to the peptidase S1 family. Plasminogen subfamily. Interacts with CSPG4 and AMOT. Interacts (via the Kringle domains) with HRG; the interaction tethers PLG to the cell surface and enhances its activation. Interacts (via Kringle 4 domain) with ADA; the interaction stimulates PLG activation when in complex with DPP4. Angiostatin: Interacts with ATP5F1A; the interaction inhibits most of the angiogenic effects of angiostatin. In the presence of the inhibitor, the activation involves only cleavage after Arg-582, yielding two chains held together by two disulfide bonds. In the absence of the inhibitor, the activation involves additionally the removal of the activation peptide.

The protein localises to the secreted. The catalysed reaction is Preferential cleavage: Lys-|-Xaa &gt; Arg-|-Xaa, higher selectivity than trypsin. Converts fibrin into soluble products.. With respect to regulation, converted into plasmin by plasminogen activators, both plasminogen and its activator being bound to fibrin. Cannot be activated with streptokinase. Its function is as follows. Plasmin dissolves the fibrin of blood clots and acts as a proteolytic factor in a variety of other processes including embryonic development, tissue remodeling, tumor invasion, and inflammation. In ovulation, weakens the walls of the Graafian follicle. It activates the urokinase-type plasminogen activator, collagenases and several complement zymogens, such as C1, C4 and C5. Cleavage of fibronectin and laminin leads to cell detachment and apoptosis. Also cleaves fibrin, thrombospondin and von Willebrand factor. Its role in tissue remodeling and tumor invasion may be modulated by CSPG4. Binds to cells. The protein is Plasminogen (PLG) of Erinaceus europaeus (Western European hedgehog).